A 148-amino-acid chain; its full sequence is UPF0178 protein BH16190 (148 aa).

Belongs to the UPF0178 family.

The sequence is that of UPF0178 protein BH16190 from Bartonella henselae (strain ATCC 49882 / DSM 28221 / CCUG 30454 / Houston 1) (Rochalimaea henselae).